A 113-amino-acid chain; its full sequence is Nucleoid-associated protein CLJ_B0037 (113 aa).

The segment covering 93–102 (EEDTSSEVKR) has biased composition (basic and acidic residues). The tract at residues 93–113 (EEDTSSEVKRLTGGMNLPGMF) is disordered.

Belongs to the YbaB/EbfC family. Homodimer.

The protein localises to the cytoplasm. It localises to the nucleoid. Its function is as follows. Binds to DNA and alters its conformation. May be involved in regulation of gene expression, nucleoid organization and DNA protection. In Clostridium botulinum (strain 657 / Type Ba4), this protein is Nucleoid-associated protein CLJ_B0037.